We begin with the raw amino-acid sequence, 54 residues long: Apelin receptor early endogenous ligand (54 aa).

An N-terminal signal peptide occupies residues 1–23 (MRFQPLFWVFFIFAMSLLFISEQ).

The protein belongs to the Elabela/Toddler family. As to quaternary structure, interacts with APLNR. As to expression, expressed in the placenta. Expressed in syncytiotrophoblasts of the placenta labyrinth at 10.5 dpc. Expressed in placental chorionic trophoblasts (at protein level). Expressed in a small population of epiblast cells in the distal half of the embryo at 7 dpc. Expressed in newly formed definitive endoderm cells in the proximal half of the embryo, while it is not present in extra-embryonic endoderm at 7.5 dpc. This expression pattern then changes to the ventral aspect of the developing foregut pocket and the entire hindgut pocket at 8.5 dpc, before becoming restricted to the foregut overlying the heart and the posterior-most hindgut. Not detected in endothelial precursor cells of the yolk sac at 8 dpc. Expressed in extraembryonic tissues as well as in the chorion at 8.25 dpc. Expressed in endometrial stroma of the uterus of pregnant mice at 8.5 dpc. Expressed in the developing heart, caudal neural tube and trophobasts at 9 dpc. Expressed in the chorionic plate of the chorioallantoic placenta at 9 dpc. Expressed in the posterior half of the ventral neural tube at 9.25 dpc. Expressed in trophoblast cells at the periphery of the placenta at 9.5 dpc. Expressed in collecting ducts of the kidney of pregnant mice at 10.5 dpc. Expressed in the epicardium of the developing heart at 11.5 dpc. Expressed weakly in the adult heart. Expressed in endothelial cells and fibroblasts and weakly in cardiomyocytes.

Its subcellular location is the secreted. The protein resides in the extracellular space. Peptide hormone that functions as endogenous ligand for the G-protein-coupled apelin receptor (APLNR/APJ), that plays a role in the regulation of normal cardiovascular function and fluid homeostasis. Functions as a balanced agonist activating both G(i) protein pathway and beta-arrestin pathway of APLNR. Downstream G proteins activation, apelin can inhibit cAMP production and activate key intracellular effectors such as ERKs. On the other hand, APLNR activation induces beta-arrestin recruitment to the membrane leading to desensitization and internalization of the receptor. Required for mesendodermal differentiation, blood vessels formation and heart morphogenesis during early development and for adult cardiovascular homeostasis. Acts as a motogen by promoting mesendodermal cell migration during gastrulation by binding and activating APLNR. Acts as an early embryonic regulator of cellular movement with a role in migration and development of cardiac progenitor cells. May act as a chemoattractant for the activation of angioblast migration toward the embryonic midline, i.e. the position of the future vessel formation, during vasculogenesis. Positively regulates sinus venosus (SV)-derived endothelial cells migration into the developing heart to promote coronary blood vessel sprouting. Plays a role in placental vascular development; promotes placental trophoblast invasion and spiral artery remodeling in the uterus. Involved in the regulation of maternal cardiovascular homeostasis to prevent gestational hypertension and for potent cardioprotective functions during heart failure. Mediates myocardial contractility in an ERK1/2-dependent manner. The polypeptide is Apelin receptor early endogenous ligand (Mus musculus (Mouse)).